Consider the following 334-residue polypeptide: Beta-ketoacyl-[acyl-carrier-protein] synthase III (334 aa).

Residues Cys114 and His260 contribute to the active site. An ACP-binding region spans residues 261–265; the sequence is QANLR. Asn290 is a catalytic residue.

The protein belongs to the thiolase-like superfamily. FabH family. As to quaternary structure, homodimer.

The protein localises to the cytoplasm. The enzyme catalyses malonyl-[ACP] + acetyl-CoA + H(+) = 3-oxobutanoyl-[ACP] + CO2 + CoA. It participates in lipid metabolism; fatty acid biosynthesis. Functionally, catalyzes the condensation reaction of fatty acid synthesis by the addition to an acyl acceptor of two carbons from malonyl-ACP. Catalyzes the first condensation reaction which initiates fatty acid synthesis and may therefore play a role in governing the total rate of fatty acid production. Possesses both acetoacetyl-ACP synthase and acetyl transacylase activities. Its substrate specificity determines the biosynthesis of branched-chain and/or straight-chain of fatty acids. The protein is Beta-ketoacyl-[acyl-carrier-protein] synthase III of Clostridium tetani (strain Massachusetts / E88).